The following is a 409-amino-acid chain: MSDVKKVVLAYSGGLDTSVILKWLQDTYQCEVVTFTADLGQGEELEPARQKALKFGIKPENIFIDDLREEFVRDFVFPMFRANTIYEGEYLLGTSIARPLIAKRQIEIARATGADAVSHGATGKGNDQVRFELGYYALMPGVKVIAPWREWDLLSREKLLAYAEKHGIPIEMKHKQGGSPYSMDANLLHISFEGRHLENPAAEAEESMWRWTVSPEAAPDAAEYVDLEFEKGDLVAINGQRLKAHELLAKLNELGGKHGIGRLDLVENRYVGMKSRGCYETPGGTILLRAHRAIESITLDREVAHLKDDLMPRYASMIYNGYWWSPERQALQALVDHTQQTVNGWVRIKLYKGNVIVVARDSKTDSLFDPTIATFEDDQGAYNQKDAHGFIRLNALRMRIAANAKTKRG.

ATP is bound by residues 10–18 (AYSGGLDTS) and A37. L-citrulline contacts are provided by Y90 and S95. G120 contacts ATP. 3 residues coordinate L-aspartate: T122, N126, and D127. Position 126 (N126) interacts with L-citrulline. The L-citrulline site is built by R130, S182, S191, E267, and Y279.

The protein belongs to the argininosuccinate synthase family. Type 1 subfamily. In terms of assembly, homotetramer.

It localises to the cytoplasm. The enzyme catalyses L-citrulline + L-aspartate + ATP = 2-(N(omega)-L-arginino)succinate + AMP + diphosphate + H(+). It participates in amino-acid biosynthesis; L-arginine biosynthesis; L-arginine from L-ornithine and carbamoyl phosphate: step 2/3. The sequence is that of Argininosuccinate synthase from Azoarcus sp. (strain BH72).